The following is a 243-amino-acid chain: Aquaporin SIP1-2 (243 aa).

The next 2 membrane-spanning stretches (helical) occupy residues 9-29 and 45-65; these read AAAA…TLGA and FALL…NILC. Residues 74 to 76 carry the NPA 1 motif; that stretch reads NPT. The next 3 membrane-spanning stretches (helical) occupy residues 98-118, 136-156, and 163-183; these read LPAQ…LMPA, GAGA…LIIV, and IIKT…GAAY. Positions 189-191 match the NPA 2 motif; it reads NPA. The helical transmembrane segment at 211–231 threads the bilayer; it reads VYWICPFIGAILAAWIFRAMF.

The protein belongs to the MIP/aquaporin (TC 1.A.8) family. SIP (TC 1.A.8.10) subfamily.

The protein localises to the membrane. Functionally, aquaporins facilitate the transport of water and small neutral solutes across cell membranes. The chain is Aquaporin SIP1-2 (SIP1-2) from Zea mays (Maize).